We begin with the raw amino-acid sequence, 663 residues long: Protein associated with UVRAG as autophagy enhancer (663 aa).

Disordered stretches follow at residues 1–36 (MVSQ…LDTE) and 65–136 (DASP…EERA). 2 stretches are compositionally biased toward polar residues: residues 80–93 (TASN…TSPL) and 105–130 (PKGT…SSVT). An interaction with UVRAG region spans residues 196-235 (EAFVLPVDAEKENAHFYVADMIISVMEKMKCNILSQQHTE). An N6-acetyllysine mark is found at K484, K534, K574, and K634.

Interacts with UVRAG; the interaction is direct and promotes association with the PI3K/PI3KC3 and HOPS complexes. Interacts with STX17. In terms of processing, acetylated by KAT5/TIP60 under autophagy induction, promoting autophagosome maturation and lipid metabolism. Lys-484 and Lys-574 constitute the key sites for tuning function in autophagy.

The protein localises to the cytoplasmic vesicle. It localises to the autophagosome membrane. Its function is as follows. Regulator of autophagy that promotes autophagosome maturation by facilitating the biogenesis of phosphatidylinositol 3-phosphate (PtdIns(3)P) in late steps of autophagy. Acts by antagonizing RUBCN, thereby stimulating phosphatidylinositol 3-kinase activity of the PI3K/PI3KC3 complex. Following anchorage to the autophagosomal SNARE STX17, promotes the recruitment of PI3K/PI3KC3 and HOPS complexes to the autophagosome to regulate the fusion specificity of autophagosomes with late endosomes/lysosomes. Binds phosphoinositides phosphatidylinositol 3-phosphate (PtdIns(3)P), 4-phosphate (PtdIns(4)P) and 5-phosphate (PtdIns(5)P). In addition to its role in autophagy, acts as a regulator of lipid and glycogen homeostasis. May act as a tumor suppressor. This is Protein associated with UVRAG as autophagy enhancer from Bos taurus (Bovine).